Here is a 271-residue protein sequence, read N- to C-terminus: Formamidopyrimidine-DNA glycosylase (271 aa).

Catalysis depends on P2, which acts as the Schiff-base intermediate with DNA. E3 functions as the Proton donor in the catalytic mechanism. K58 acts as the Proton donor; for beta-elimination activity in catalysis. The DNA site is built by H91, R110, and R152. The FPG-type zinc finger occupies 237 to 271 (QIYGRSAHPCPICGTPIRLERIGQRASYYCTQCQH). Catalysis depends on R261, which acts as the Proton donor; for delta-elimination activity.

It belongs to the FPG family. In terms of assembly, monomer. It depends on Zn(2+) as a cofactor.

It carries out the reaction Hydrolysis of DNA containing ring-opened 7-methylguanine residues, releasing 2,6-diamino-4-hydroxy-5-(N-methyl)formamidopyrimidine.. The enzyme catalyses 2'-deoxyribonucleotide-(2'-deoxyribose 5'-phosphate)-2'-deoxyribonucleotide-DNA = a 3'-end 2'-deoxyribonucleotide-(2,3-dehydro-2,3-deoxyribose 5'-phosphate)-DNA + a 5'-end 5'-phospho-2'-deoxyribonucleoside-DNA + H(+). Functionally, involved in base excision repair of DNA damaged by oxidation or by mutagenic agents. Acts as a DNA glycosylase that recognizes and removes damaged bases. Has a preference for oxidized purines, such as 7,8-dihydro-8-oxoguanine (8-oxoG). Has AP (apurinic/apyrimidinic) lyase activity and introduces nicks in the DNA strand. Cleaves the DNA backbone by beta-delta elimination to generate a single-strand break at the site of the removed base with both 3'- and 5'-phosphates. This Nitrosococcus oceani (strain ATCC 19707 / BCRC 17464 / JCM 30415 / NCIMB 11848 / C-107) protein is Formamidopyrimidine-DNA glycosylase.